An 890-amino-acid polypeptide reads, in one-letter code: Pentatricopeptide repeat-containing protein At3g57430, chloroplastic (890 aa).

A chloroplast-targeting transit peptide spans 1–44 (MSCPLAFTFSLPSIFPFPSQLLPFSRHKHPYLLRATPTSATEDV). 18 PPR repeats span residues 61 to 95 (SPEW…GIKP), 96 to 130 (DNYA…GYGV), 132 to 162 (SVTV…ISER), 163 to 197 (NQVS…NVEP), 198 to 231 (SSFT…GLRK), 235 to 265 (NSFI…FGGR), 266 to 300 (DLVT…GVEP), 301 to 335 (DEFT…GSLD), 337 to 371 (NSFV…KIGL), 372 to 398 (WNAM…MEES), 404 to 438 (NSTT…GLDR), 439 to 473 (DRFV…DLVT), 474 to 504 (WNTM…ERKV), 516 to 550 (NSIT…NLAT), 551 to 581 (DVAV…IPQK), 582 to 616 (NVIT…GVKP), 617 to 652 (NEVT…GVEP), and 653 to 683 (SSDH…MPRD). Residues 689–764 (AWSSLLGASR…EPGCSWIEHG (76 aa)) are type E motif. The segment at 765–795 (DEVHKFVAGDSSHPQSEKLSGYLETLWERMR) is type E(+) motif. The segment at 796–890 (KEGYVPDTSC…NGTCSCGDYW (95 aa)) is type DYW motif.

Belongs to the PPR family. PCMP-H subfamily.

The protein resides in the plastid. Its subcellular location is the chloroplast. Its function is as follows. Involved in RNA editing events in chloroplasts. Required for the editing of a single site in ndhB and ndhF transcripts, which are two plastid-encoded subunits of the chloroplast NAD(P)H dehydrogenase (NDH) complex. Required for the editing of a single site in psbZ. Required for optimal activity of the NDH complex of the photosynthetic electron transport chain. In Arabidopsis thaliana (Mouse-ear cress), this protein is Pentatricopeptide repeat-containing protein At3g57430, chloroplastic (PCMP-H81).